We begin with the raw amino-acid sequence, 29 residues long: Cycloviolacin-O16 (29 aa).

A cross-link (cyclopeptide (Gly-Asn)) is located at residues 1–29 (GLPCGETCFTGKCYTPGCSCSYPICKKIN). Disulfide bonds link C4/C18, C8/C20, and C13/C25.

This is a cyclic peptide.

Functionally, probably participates in a plant defense mechanism. This chain is Cycloviolacin-O16, found in Viola odorata (Sweet violet).